The following is a 340-amino-acid chain: MNPFLKYGITTGLAAAAAAKAAALYSKGIVPKSVTVPTPIGLRVEVFVERVFQRGEIYCAEVRKFSGDNPDVLNGVIIRACVRPLNNGVVIKGGEGVGIVTRPGLPVPPGEHAINPVPRRMIEEAVREVLEGAEVLVEVPDGKLLAEKTMNPRLGIVGGISILGTTGIEAPVSADEFLGHIEAELSALRERRDIAILAQGNTSYKAAQAVFGDVVVKIGDMVGYAVEKAAALGYKAAYLFTMPGKLAKLALGAYNTHSAQCDGRVEAVLYALVKLRAPYEVLLEVSNAASVGEALAKAGDYAGGVIAIMARRAKEYLERFKIPVEIYVVNDKGEVLFSTT.

This sequence belongs to the CbiD family.

It carries out the reaction Co-precorrin-5B + S-adenosyl-L-methionine = Co-precorrin-6A + S-adenosyl-L-homocysteine. It functions in the pathway cofactor biosynthesis; adenosylcobalamin biosynthesis; cob(II)yrinate a,c-diamide from sirohydrochlorin (anaerobic route): step 6/10. Catalyzes the methylation of C-1 in cobalt-precorrin-5B to form cobalt-precorrin-6A. This chain is Cobalt-precorrin-5B C(1)-methyltransferase, found in Pyrobaculum aerophilum (strain ATCC 51768 / DSM 7523 / JCM 9630 / CIP 104966 / NBRC 100827 / IM2).